Consider the following 235-residue polypeptide: 7-carboxy-7-deazaguanine synthase (235 aa).

Residues 25–27 and Arg-40 each bind substrate; that span reads IQG. Residues 31-235 enclose the Radical SAM core domain; the sequence is FTGTYSVFVR…PRLHLLVQLP (205 aa). [4Fe-4S] cluster contacts are provided by Cys-44, Cys-48, and Cys-51. Position 53 (Thr-53) interacts with Mg(2+). Residue Thr-85 participates in substrate binding. Residues Gly-87 and 135-137 each bind S-adenosyl-L-methionine; that span reads SPK. Substrate is bound at residue Pro-235.

This sequence belongs to the radical SAM superfamily. 7-carboxy-7-deazaguanine synthase family. In terms of assembly, homodimer. The cofactor is [4Fe-4S] cluster. S-adenosyl-L-methionine serves as cofactor. Mg(2+) is required as a cofactor.

The enzyme catalyses 6-carboxy-5,6,7,8-tetrahydropterin + H(+) = 7-carboxy-7-deazaguanine + NH4(+). It participates in purine metabolism; 7-cyano-7-deazaguanine biosynthesis. Catalyzes the complex heterocyclic radical-mediated conversion of 6-carboxy-5,6,7,8-tetrahydropterin (CPH4) to 7-carboxy-7-deazaguanine (CDG), a step common to the biosynthetic pathways of all 7-deazapurine-containing compounds. This is 7-carboxy-7-deazaguanine synthase from Hyperthermus butylicus (strain DSM 5456 / JCM 9403 / PLM1-5).